The chain runs to 428 residues: uncharacterized protein (428 aa).

The disordered stretch occupies residues 72–91 (SQGSPVAPSPNHRSTMYSSS). Serine 127 is modified (phosphoserine).

This is an uncharacterized protein from Saccharomyces cerevisiae (strain ATCC 204508 / S288c) (Baker's yeast).